A 310-amino-acid chain; its full sequence is D-alanyl-D-alanine endopeptidase (310 aa).

Residues 1 to 23 (MRNRLLSLVTLFLSLSVATAVSA) form the signal peptide. The active-site Acyl-ester intermediate is the Ser-66. Catalysis depends on Lys-69, which acts as the Proton acceptor. Ser-123 is a catalytic residue. Lys-230 provides a ligand contact to substrate.

It belongs to the peptidase S11 family.

The protein localises to the periplasm. In terms of biological role, cell wall formation. This Pseudomonas aeruginosa (strain ATCC 15692 / DSM 22644 / CIP 104116 / JCM 14847 / LMG 12228 / 1C / PRS 101 / PAO1) protein is D-alanyl-D-alanine endopeptidase (pbpG).